Here is a 156-residue protein sequence, read N- to C-terminus: CD-NTase/cGAS isopeptidase (156 aa).

Residues 9-147 (IDDFDNHVVI…WIGKKIKNDI (139 aa)) enclose the MPN domain. Glu38 functions as the Proton donor/acceptor in the catalytic mechanism. Residues His100, His102, and Asp113 each contribute to the Zn(2+) site. A JAMM motif motif is present at residues 100–113 (HTHPEDFPHPSFID).

This sequence belongs to the peptidase M67B family. Cap3 isopeptidase subfamily.

In terms of biological role, metalloprotease priming reversal component of a CBASS antivirus system. CBASS (cyclic oligonucleotide-based antiphage signaling system) provides immunity against bacteriophages. The CD-NTase protein (DncV) synthesizes cyclic nucleotides in response to infection; these serve as specific second messenger signals. The signals activate a diverse range of effectors, leading to bacterial cell death and thus abortive phage infection. A type II-A(GA) CBASS system. Functionally, reverses the primed state of DncV, the CD-NTase, cleaving it from cellular proteins. Cleaves a Sumo-DncV-DncV fusion protein precisely between the 2 DncV moieties. Protects E.coli against phage infection. When capV and dncV are introduced in E.coli MG1655 there is 1000-fold protection against phage P1; protection against other phage (T4, T5 and T6) requires the 2 subsequent genes. In another paper the capV-dncV-cap2-cap3 operon gives 10(4)-10(5)-fold protection against phages lambda, T2, T4 and T6, about 1000-fold protection against P1 and 10-fold protection against T5. This Escherichia coli (strain TW11681) protein is CD-NTase/cGAS isopeptidase.